A 167-amino-acid polypeptide reads, in one-letter code: Small ribosomal subunit protein uS5 (167 aa).

An S5 DRBM domain is found at 12–75 (LEDQVVSINR…DAAKKSLIEV (64 aa)).

It belongs to the universal ribosomal protein uS5 family. Part of the 30S ribosomal subunit. Contacts proteins S4 and S8.

With S4 and S12 plays an important role in translational accuracy. Functionally, located at the back of the 30S subunit body where it stabilizes the conformation of the head with respect to the body. The polypeptide is Small ribosomal subunit protein uS5 (Lacticaseibacillus paracasei (strain ATCC 334 / BCRC 17002 / CCUG 31169 / CIP 107868 / KCTC 3260 / NRRL B-441) (Lactobacillus paracasei)).